The chain runs to 157 residues: Peptide methionine sulfoxide reductase MsrA (157 aa).

The active site involves cysteine 10.

Belongs to the MsrA Met sulfoxide reductase family.

The enzyme catalyses L-methionyl-[protein] + [thioredoxin]-disulfide + H2O = L-methionyl-(S)-S-oxide-[protein] + [thioredoxin]-dithiol. It catalyses the reaction [thioredoxin]-disulfide + L-methionine + H2O = L-methionine (S)-S-oxide + [thioredoxin]-dithiol. Functionally, has an important function as a repair enzyme for proteins that have been inactivated by oxidation. Catalyzes the reversible oxidation-reduction of methionine sulfoxide in proteins to methionine. The chain is Peptide methionine sulfoxide reductase MsrA from Clostridium botulinum (strain Okra / Type B1).